Here is a 332-residue protein sequence, read N- to C-terminus: Twinfilin-1 (332 aa).

Positions 5–132 (SGIVAEQALL…VDLKNFDSAR (128 aa)) constitute an ADF-H 1 domain. Phosphoserine is present on residues S167 and S172. In terms of domain architecture, ADF-H 2 spans 173 to 300 (PLSLTFRVNS…DKSLLMATNK (128 aa)). The disordered stretch occupies residues 301–332 (EDSLDHGSNPDLPNKSNLKFNKPKGPLRKRRT). The segment covering 321-332 (NKPKGPLRKRRT) has biased composition (basic residues).

The protein belongs to the actin-binding proteins ADF family. Twinfilin subfamily. Interacts with G-actin; ADP-actin form.

The protein localises to the cytoplasm. It localises to the cytoskeleton. Actin-binding protein involved in motile and morphological processes. Inhibits actin polymerization, likely by sequestering G-actin. Prevents actin filament assembly by forming a 1:1 complex with actin monomers, and inhibits the nucleotide exchange reaction of actin monomers. The protein is Twinfilin-1 (TWF1) of Saccharomyces cerevisiae (strain ATCC 204508 / S288c) (Baker's yeast).